A 270-amino-acid polypeptide reads, in one-letter code: Ethanolamine ammonia-lyase small subunit (270 aa).

The adenosylcob(III)alamin site is built by Val-166, Glu-187, and Cys-216.

It belongs to the EutC family. In terms of assembly, the basic unit is a heterodimer which dimerizes to form tetramers. The heterotetramers trimerize; 6 large subunits form a core ring with 6 small subunits projecting outwards. Requires adenosylcob(III)alamin as cofactor.

Its subcellular location is the bacterial microcompartment. It catalyses the reaction ethanolamine = acetaldehyde + NH4(+). The protein operates within amine and polyamine degradation; ethanolamine degradation. Its function is as follows. Catalyzes the deamination of various vicinal amino-alcohols to oxo compounds. Allows this organism to utilize ethanolamine as the sole source of nitrogen and carbon in the presence of external vitamin B12. This is Ethanolamine ammonia-lyase small subunit from Ralstonia nicotianae (strain ATCC BAA-1114 / GMI1000) (Ralstonia solanacearum).